A 108-amino-acid polypeptide reads, in one-letter code: Flagellar hook-basal body complex protein FliE (108 aa).

The protein belongs to the FliE family.

It is found in the bacterial flagellum basal body. This is Flagellar hook-basal body complex protein FliE from Pseudomonas fluorescens (strain ATCC BAA-477 / NRRL B-23932 / Pf-5).